The sequence spans 215 residues: Eukaryotic translation initiation factor 4E-1A (215 aa).

Over residues 1–14 (MATAEPETSTNPSN) the composition is skewed to low complexity. The disordered stretch occupies residues 1–23 (MATAEPETSTNPSNSEEKNEENE). Residues 54–55 (WQ), 100–101 (WE), 155–160 (RTKGDK), and 203–205 (TKS) contribute to the mRNA site.

The protein belongs to the eukaryotic initiation factor 4E family. In terms of assembly, interacts with eif4ebp3l. In terms of tissue distribution, expressed in all tissues examined, including gill, fin, heart, intestine, muscle, ovary and testis.

Its subcellular location is the cytoplasm. The protein localises to the nucleus. In terms of biological role, recognizes and binds the 7-methylguanosine (m7G)-containing mRNA cap during an early step in the initiation of protein synthesis and facilitates ribosome binding by inducing the unwinding of the mRNAs secondary structures. Also promotes export of a subset of mRNAs from the nucleus to the cytoplasm. This chain is Eukaryotic translation initiation factor 4E-1A, found in Danio rerio (Zebrafish).